The chain runs to 658 residues: Probable mitochondrial Rho GTPase gemA (658 aa).

At 1-633 (MKNNIKVILI…NGSNGSNNSN (633 aa)) the chain is on the cytoplasmic side. Positions 2 to 175 (KNNIKVILIG…LYASQTSVFF (174 aa)) constitute a Miro 1 domain. GTP contacts are provided by residues 11–18 (GDEQVGKS), 57–62 (DTFDDG), and 118–121 (NKLD). EF-hand domains lie at 191–226 (GCER…CGHE) and 311–346 (MGNE…TPKI). Aspartate 204, aspartate 206, aspartate 208, serine 210, glutamate 215, aspartate 324, aspartate 326, aspartate 328, and aspartate 335 together coordinate Ca(2+). In terms of domain architecture, Miro 2 spans 420 to 616 (RNIVNCYVFG…YHEMMETIVN (197 aa)). GTP contacts are provided by residues 429–436 (GAEAVGKT), 466–468 (LLK), and 530–533 (TKNN). Residues 532-575 (NNNNNNNNNNNNNNNNNNNNLNNNNNNINNNNNNNNNNTTTTNA) form a disordered region. Residues 634–656 (ILTYLVIAAGVAGVGLLLSKYLA) traverse the membrane as a helical; Anchor for type IV membrane protein segment. Topologically, residues 657–658 (KK) are mitochondrial intermembrane.

It belongs to the mitochondrial Rho GTPase family.

The protein localises to the mitochondrion outer membrane. In terms of biological role, mitochondrial GTPase involved in mitochondrial trafficking. Probably involved in control of anterograde transport of mitochondria and their subcellular distribution. The polypeptide is Probable mitochondrial Rho GTPase gemA (gemA) (Dictyostelium discoideum (Social amoeba)).